The primary structure comprises 224 residues: Small ribosomal subunit protein uS3 (224 aa).

The KH type-2 domain maps to 39–107; the sequence is IREFLKKKPS…DVWVEIAEVK (69 aa).

Belongs to the universal ribosomal protein uS3 family. In terms of assembly, part of the 30S ribosomal subunit. Forms a tight complex with proteins S10 and S14.

Functionally, binds the lower part of the 30S subunit head. Binds mRNA in the 70S ribosome, positioning it for translation. The polypeptide is Small ribosomal subunit protein uS3 (Chlamydia muridarum (strain MoPn / Nigg)).